The primary structure comprises 489 residues: Rhamnulokinase (489 aa).

13–17 is a binding site for ATP; it reads ASSGR. An intrachain disulfide couples cysteine 68 to cysteine 222. Substrate is bound by residues glycine 83 and 236–238; that span reads HDT. Residue aspartate 237 is the Proton acceptor of the active site. ATP is bound at residue threonine 259. Asparagine 296 contributes to the substrate binding site. Residue glutamine 304 coordinates ATP. The cysteines at positions 353 and 370 are disulfide-linked. Residue glycine 402 participates in ATP binding. Residues cysteine 413 and cysteine 417 are joined by a disulfide bond.

It belongs to the rhamnulokinase family. The cofactor is Mg(2+).

It carries out the reaction L-rhamnulose + ATP = L-rhamnulose 1-phosphate + ADP + H(+). The protein operates within carbohydrate degradation; L-rhamnose degradation; glycerone phosphate from L-rhamnose: step 2/3. In terms of biological role, involved in the catabolism of L-rhamnose (6-deoxy-L-mannose). Catalyzes the transfer of the gamma-phosphate group from ATP to the 1-hydroxyl group of L-rhamnulose to yield L-rhamnulose 1-phosphate. In Salmonella enteritidis PT4 (strain P125109), this protein is Rhamnulokinase.